The primary structure comprises 165 residues: Type IV major pilin protein PilE1 (165 aa).

The propeptide at 1–7 (MNTLQKG) is leader sequence. Phe-8 carries the N-methylphenylalanine modification. Residues 8-28 (FTLIELMIVIAIVGILAAVAL) form a helical membrane-spanning segment. O-linked (DADDGlc) serine glycosylation occurs at Ser-70. At Ser-75 the chain carries O-(2-aminoethylphosphoryl)serine; alternate. Ser-75 is modified (O-(2-cholinephosphoryl)serine; alternate). Ser-75 is modified (phosphoserine; alternate). Ser-101 bears the O-(sn-1-glycerophosphoryl)serine; partial mark. Residues Cys-128 and Cys-158 are joined by a disulfide bond. Positions 137–153 (DDTVADAKDGKEIDTKH) are enriched in basic and acidic residues. Residues 137–165 (DDTVADAKDGKEIDTKHLPSTCRDNFDAK) are disordered.

It belongs to the N-Me-Phe pilin family. In terms of assembly, the pili are polar flexible filaments of about 5.4 nanometers diameter and 2.5 micrometers average length; they consist of only a single polypeptide chain arranged in a helical configuration of five subunits per turn in the assembled pilus. In terms of processing, the O-linked glycan identified as Gal-GlcNAc disaccharide in PubMed:7477282 and PubMed:10048019 is now identified as either a hexosyl-diacetamidotrideoxyhexoside (DATDHex) by mass spectrometry in PubMed:15249686, or alpha-D-galactopyranosyl-(1-&gt;3)-2,4-diacetamido-2,4-dideoxy-beta-D-glucopyranoside (DADDGlc) by X-ray diffraction in PubMed:16949362. It is not clear whether there is a chemical difference in the glycosylation of the two derivatives of strain MS11 used in these experiments, or not. Post-translationally, in some MS11 derivative strains, Ser-75 is modified to O-(2-aminoethylphosphoryl)serine, and in some other derivatives that can be secondarily modified to O-(2-cholinephosphoryl)serine by N-methylation.

It localises to the fimbrium. The protein resides in the membrane. Major component of the type IV pilus (T4P) that plays a role in cellular adherence, microcolony formation, resistance to neutrophil mediated killing, twitching motility as well as transformation. Mediates the attachment and the formation of bacterial microcolonies on host epithelial cells. Mechanistically, pili retractation induces host NF-kappa-B activation in infected cells, which is temporally associated with the formation of gonococcal microcolonies. This is Type IV major pilin protein PilE1 (pilE1) from Neisseria gonorrhoeae.